A 388-amino-acid chain; its full sequence is Phosphopentomutase (388 aa).

The Mn(2+) site is built by D11, D283, H288, D324, H325, and H336.

It belongs to the phosphopentomutase family. Mn(2+) serves as cofactor.

The protein resides in the cytoplasm. It catalyses the reaction 2-deoxy-alpha-D-ribose 1-phosphate = 2-deoxy-D-ribose 5-phosphate. It carries out the reaction alpha-D-ribose 1-phosphate = D-ribose 5-phosphate. It participates in carbohydrate degradation; 2-deoxy-D-ribose 1-phosphate degradation; D-glyceraldehyde 3-phosphate and acetaldehyde from 2-deoxy-alpha-D-ribose 1-phosphate: step 1/2. Its function is as follows. Isomerase that catalyzes the conversion of deoxy-ribose 1-phosphate (dRib-1-P) and ribose 1-phosphate (Rib-1-P) to deoxy-ribose 5-phosphate (dRib-5-P) and ribose 5-phosphate (Rib-5-P), respectively. The polypeptide is Phosphopentomutase (Enterococcus faecalis (strain ATCC 700802 / V583)).